The sequence spans 717 residues: DNA ligase (717 aa).

Residues 44–48 (DADYD), 93–94 (SL), and Glu127 contribute to the NAD(+) site. Lys129 functions as the N6-AMP-lysine intermediate in the catalytic mechanism. Positions 150, 186, 302, and 326 each coordinate NAD(+). Zn(2+) contacts are provided by Cys431, Cys434, Cys455, and Cys461. A BRCT domain is found at 639-717 (ATDSPVAGKT…EDEWLALIGG (79 aa)).

This sequence belongs to the NAD-dependent DNA ligase family. LigA subfamily. Mg(2+) is required as a cofactor. Requires Mn(2+) as cofactor.

It catalyses the reaction NAD(+) + (deoxyribonucleotide)n-3'-hydroxyl + 5'-phospho-(deoxyribonucleotide)m = (deoxyribonucleotide)n+m + AMP + beta-nicotinamide D-nucleotide.. Functionally, DNA ligase that catalyzes the formation of phosphodiester linkages between 5'-phosphoryl and 3'-hydroxyl groups in double-stranded DNA using NAD as a coenzyme and as the energy source for the reaction. It is essential for DNA replication and repair of damaged DNA. The protein is DNA ligase of Sinorhizobium medicae (strain WSM419) (Ensifer medicae).